Reading from the N-terminus, the 476-residue chain is Siroheme synthase (476 aa).

The precorrin-2 dehydrogenase /sirohydrochlorin ferrochelatase stretch occupies residues 1 to 203 (MHYFPVFADL…RQTEAAKKEL (203 aa)). NAD(+)-binding positions include 22 to 23 (GV) and 43 to 44 (QK). Ser-128 bears the Phosphoserine mark. The segment at 214–476 (GFVSLVGAGP…LDSLRIESVA (263 aa)) is uroporphyrinogen-III C-methyltransferase. S-adenosyl-L-methionine is bound at residue Pro-223. Residue Asp-246 is the Proton acceptor of the active site. The active-site Proton donor is Lys-268. S-adenosyl-L-methionine-binding positions include 299 to 301 (GGD), Val-304, 329 to 330 (TA), Met-381, and Gly-410.

This sequence in the N-terminal section; belongs to the precorrin-2 dehydrogenase / sirohydrochlorin ferrochelatase family. In the C-terminal section; belongs to the precorrin methyltransferase family.

It catalyses the reaction uroporphyrinogen III + 2 S-adenosyl-L-methionine = precorrin-2 + 2 S-adenosyl-L-homocysteine + H(+). The enzyme catalyses precorrin-2 + NAD(+) = sirohydrochlorin + NADH + 2 H(+). It carries out the reaction siroheme + 2 H(+) = sirohydrochlorin + Fe(2+). The protein operates within cofactor biosynthesis; adenosylcobalamin biosynthesis; precorrin-2 from uroporphyrinogen III: step 1/1. Its pathway is cofactor biosynthesis; adenosylcobalamin biosynthesis; sirohydrochlorin from precorrin-2: step 1/1. It functions in the pathway porphyrin-containing compound metabolism; siroheme biosynthesis; precorrin-2 from uroporphyrinogen III: step 1/1. It participates in porphyrin-containing compound metabolism; siroheme biosynthesis; siroheme from sirohydrochlorin: step 1/1. The protein operates within porphyrin-containing compound metabolism; siroheme biosynthesis; sirohydrochlorin from precorrin-2: step 1/1. In terms of biological role, multifunctional enzyme that catalyzes the SAM-dependent methylations of uroporphyrinogen III at position C-2 and C-7 to form precorrin-2 via precorrin-1. Then it catalyzes the NAD-dependent ring dehydrogenation of precorrin-2 to yield sirohydrochlorin. Finally, it catalyzes the ferrochelation of sirohydrochlorin to yield siroheme. In Actinobacillus succinogenes (strain ATCC 55618 / DSM 22257 / CCUG 43843 / 130Z), this protein is Siroheme synthase.